The following is a 416-amino-acid chain: Serine hydroxymethyltransferase (416 aa).

(6S)-5,6,7,8-tetrahydrofolate-binding positions include Leu-121 and 125-127; that span reads GHL. Lys-229 carries the N6-(pyridoxal phosphate)lysine modification.

Belongs to the SHMT family. Homodimer. It depends on pyridoxal 5'-phosphate as a cofactor.

It is found in the cytoplasm. The catalysed reaction is (6R)-5,10-methylene-5,6,7,8-tetrahydrofolate + glycine + H2O = (6S)-5,6,7,8-tetrahydrofolate + L-serine. It participates in one-carbon metabolism; tetrahydrofolate interconversion. Its pathway is amino-acid biosynthesis; glycine biosynthesis; glycine from L-serine: step 1/1. Its function is as follows. Catalyzes the reversible interconversion of serine and glycine with tetrahydrofolate (THF) serving as the one-carbon carrier. This reaction serves as the major source of one-carbon groups required for the biosynthesis of purines, thymidylate, methionine, and other important biomolecules. Also exhibits THF-independent aldolase activity toward beta-hydroxyamino acids, producing glycine and aldehydes, via a retro-aldol mechanism. The protein is Serine hydroxymethyltransferase of Neisseria meningitidis serogroup C / serotype 2a (strain ATCC 700532 / DSM 15464 / FAM18).